Consider the following 255-residue polypeptide: BTB/POZ domain-containing protein KCTD14 (255 aa).

A disordered region spans residues M1–P29. The 98-residue stretch at T33–G130 folds into the BTB domain.

The chain is BTB/POZ domain-containing protein KCTD14 (KCTD14) from Homo sapiens (Human).